We begin with the raw amino-acid sequence, 575 residues long: Serine/threonine-protein kinase Pink1, mitochondrial (575 aa).

A mitochondrion-targeting transit peptide spans 1-51 (MSLLAYTNLLLQNGRIFRYYKKANIKKFIKKIIKLDLKSTPSEASVSRQTF). The Mitochondrial intermembrane segment spans residues 52-94 (LSTGLNSVKNAVQLQARKLLINNVLERVTPTLNSDLKKKAAKR). The chain crosses the membrane as a helical span at residues 95–118 (LFYGDSAPFFALVGVSLASGSGLL). Residues 119 to 575 (TKDDELEGIC…KWIQELHIYN (457 aa)) lie on the Cytoplasmic side of the membrane. Lys-193 lines the ATP pocket. Ser-202 and Ser-204 each carry phosphoserine; by autocatalysis. A Mg(2+)-binding site is contributed by Glu-214. Residue Thr-305 is modified to Phosphothreonine; by autocatalysis. Asp-334 acts as the Proton acceptor in catalysis. Residues Asn-339 and Asp-357 each contribute to the Mg(2+) site.

The protein belongs to the protein kinase superfamily. Ser/Thr protein kinase family. It depends on Mg(2+) as a cofactor. Post-translationally, proteolytically cleaved. In healthy cells, the precursor is continuously imported into mitochondria where it is proteolytically cleaved into its short form by the mitochondrial rhomboid protease rho-7 (8231301). The short form is then released into the cytosol where it rapidly undergoes proteasome-dependent degradation. In unhealthy cells, when cellular stress conditions lead to the loss of mitochondrial membrane potential, mitochondrial import is impaired leading to the precursor accumulating on the outer mitochondrial membrane (OMM). Autophosphorylated. Autophosphorylated on Ser-202, which activates kinase activity. Loss of mitochondrial membrane potential results in the precursor accumulating on the outer mitochondrial membrane (OMM) where it is activated by autophosphorylation at Ser-202. Autophosphorylation is sufficient and essential for selective recruitment of park to depolarized mitochondria, likely via Pink1-dependent phosphorylation of polyubiquitin chains. Also autophosphorylated at Ser-204 and Thr-305.

The protein resides in the mitochondrion outer membrane. It is found in the mitochondrion inner membrane. Its subcellular location is the cytoplasm. The protein localises to the cytosol. It carries out the reaction L-seryl-[protein] + ATP = O-phospho-L-seryl-[protein] + ADP + H(+). It catalyses the reaction L-threonyl-[protein] + ATP = O-phospho-L-threonyl-[protein] + ADP + H(+). In terms of biological role, acts as a serine/threonine-protein kinase. Exhibits a substrate preference for proline at position P+1 and a general preference at several residues for basic residues such as arginine. Also exhibits moderate preferences for a phosphotyrosine at position P-3 and a tryptophan at P-5. Critical to mitochondrial homeostasis it mediates several pathways that maintain mitochondrial health and function Protects against mitochondrial dysfunction during cellular stress by phosphorylating mitochondrial proteins such as park and likely Drp1, to coordinate mitochondrial quality control mechanisms that remove and replace dysfunctional mitochondrial components. Depending on the severity of mitochondrial damage and/or dysfunction, activity ranges from preventing apoptosis and stimulating mitochondrial biogenesis to regulating mitochondrial dynamics and eliminating severely damaged mitochondria via mitophagy. Appears to be particularly important in maintaining the physiology and function of cells with high energy demands that are undergoing stress or altered metabolic environment, including spermatids, muscle cells and neurons such as the dopaminergic (DA) neurons. Mediates the translocation and activation of park at the outer membrane (OMM) of dysfunctional/depolarized mitochondria. At the OMM of damaged mitochondria, phosphorylates pre-existing polyubiquitin chains, the Pink1-phosphorylated polyubiquitin then recruits park from the cytosol to the OMM where park is fully activated by phosphorylation at 'Ser-94' by Pink1. When cellular stress results in irreversible mitochondrial damage, functions with park to promote the clearance of dysfunctional and/or depolarized mitochondria by selective autophagy (mitophagy). The Pink1-park pathway also promotes fission and/or inhibits fusion of damaged mitochondria, by phosphorylating and thus promoting the park-dependent degradation of proteins involved in mitochondrial fusion/fission such as Marf, Opa1 and fzo. This prevents the refusion of unhealthy mitochondria with the mitochondrial network or initiates mitochondrial fragmentation facilitating their later engulfment by autophagosomes. Also likely to promote mitochondrial fission independently of park and Atg7-mediated mitophagy, via the phosphorylation and activation of Drp1. Regulates motility of damaged mitochondria by phosphorylating Miro which likely promotes its park-dependent degradation by the proteasome; in motor neurons, this inhibits mitochondrial intracellular anterograde transport along the axons which probably increases the chance of the mitochondria being eliminated in the soma. The Pink1-park pathway is also involved in mitochondrial regeneration processes such as promoting mitochondrial biogenesis, activating localized mitochondrial repair, promoting selective turnover of mitochondrial proteins and initiating the mitochondrial import of endogenous proteins. Involved in mitochondrial biogenesis by promoting the park-dependent ubiquitination of transcriptional repressor Paris which leads to its subsequent proteasomal degradation and allows activation of the transcription factor srl. Functions with park to promote localized mitochondrial repair by activating the translation of specific nuclear-encoded mitochondrial RNAs (nc-mtRNAs) on the mitochondrial surface, including several key electron transport chain component nc-mtRNAs. During oogenesis, phosphorylates and inactivates larp on the membrane of defective mitochondria, thus impairing local translation and mtDNA replication and consequently, reducing transmission of deleterious mtDNA mutations to the mature oocyte. Phosphorylates the mitochondrial acyl-CoA dehydrogenase Mcad, and appears to be important for maintaining fatty acid and amino acid metabolism via a mechanism that is independent of it's role in maintaining production of ATP. The sequence is that of Serine/threonine-protein kinase Pink1, mitochondrial from Pediculus humanus subsp. corporis (Body louse).